A 70-amino-acid polypeptide reads, in one-letter code: Cold shock-like protein (70 aa).

Residues 5–65 (GTVKWFSKDK…DTKGPRAKNV (61 aa)) form the CSD domain.

The protein localises to the cytoplasm. The protein is Cold shock-like protein (csp) of Aquifex aeolicus (strain VF5).